Consider the following 236-residue polypeptide: MTQIDNRFRRLSQALDYAFQKPELLRQALTHRSYSSANNERFEFVGDSILNYTVARMLYDQFPQLTEGELSRLRANLVNQNTLAEIAHELKLGDYLYLGEGELKSGGFNRPSILADALEATFAAVSFDADFAAAEQVVRRLYNQRVATIDTTRQAKDAKTRLQEALQARKLALPKYRILSQSGEAHEQWFKVECDLGEMALISTGDGGSRRAAEQQAAEAALTLLEQKLAASKKRS.

Residues 8–130 enclose the RNase III domain; sequence FRRLSQALDY…TFAAVSFDAD (123 aa). Position 43 (glutamate 43) interacts with Mg(2+). Aspartate 47 is an active-site residue. Mg(2+) contacts are provided by aspartate 116 and glutamate 119. Glutamate 119 is an active-site residue. The 71-residue stretch at 157 to 227 folds into the DRBM domain; sequence DAKTRLQEAL…AEAALTLLEQ (71 aa).

It belongs to the ribonuclease III family. As to quaternary structure, homodimer. Mg(2+) is required as a cofactor.

It is found in the cytoplasm. The catalysed reaction is Endonucleolytic cleavage to 5'-phosphomonoester.. Functionally, digests double-stranded RNA. Involved in the processing of primary rRNA transcript to yield the immediate precursors to the large and small rRNAs (23S and 16S). Processes some mRNAs, and tRNAs when they are encoded in the rRNA operon. Processes pre-crRNA and tracrRNA of type II CRISPR loci if present in the organism. This Chromobacterium violaceum (strain ATCC 12472 / DSM 30191 / JCM 1249 / CCUG 213 / NBRC 12614 / NCIMB 9131 / NCTC 9757 / MK) protein is Ribonuclease 3.